Here is a 397-residue protein sequence, read N- to C-terminus: 3-ketoacyl-CoA thiolase, mitochondrial (397 aa).

A mitochondrion; not cleaved-targeting transit peptide spans 1–16 (MALLRGVFIVAAKRTP). At Lys25 the chain carries N6-acetyllysine; alternate. Lys25 carries the N6-succinyllysine; alternate modification. Residue Lys45 is modified to N6-succinyllysine. Catalysis depends on Cys92, which acts as the Acyl-thioester intermediate. At Thr119 the chain carries Phosphothreonine. At Ser121 the chain carries Phosphoserine. Phosphotyrosine is present on Tyr127. Thr136 bears the Phosphothreonine mark. An N6-acetyllysine; alternate mark is found at Lys137, Lys143, Lys158, Lys171, Lys191, and Lys209. Lys137, Lys143, Lys158, Lys171, Lys191, and Lys209 each carry N6-succinyllysine; alternate. N6-succinyllysine occurs at positions 211, 212, and 214. The CoA site is built by Arg224 and Thr227. At Lys240 the chain carries N6-succinyllysine. N6-acetyllysine is present on Lys241. Ser251 is a binding site for CoA. N6-acetyllysine is present on residues Lys269 and Lys270. Lys305 bears the N6-acetyllysine; alternate mark. Lys305 is modified (N6-succinyllysine; alternate). Ser310 bears the Phosphoserine mark. Lys312 bears the N6-acetyllysine; alternate mark. At Lys312 the chain carries N6-succinyllysine; alternate. At Ser333 the chain carries Phosphoserine. Residue Lys340 is modified to N6-acetyllysine. The residue at position 344 (Ser344) is a Phosphoserine. Position 375 is an N6-acetyllysine (Lys375). The active-site Proton donor/acceptor is Cys382.

The protein belongs to the thiolase-like superfamily. Thiolase family. Homotetramer. Interacts with BNIP3. In terms of tissue distribution, expressed in liver, brown adipose tissue and heart (at protein level).

Its subcellular location is the mitochondrion. It catalyses the reaction an acyl-CoA + acetyl-CoA = a 3-oxoacyl-CoA + CoA. The catalysed reaction is 2 acetyl-CoA = acetoacetyl-CoA + CoA. It carries out the reaction acetyl-CoA + H2O = acetate + CoA + H(+). The enzyme catalyses propanoyl-CoA + H2O = propanoate + CoA + H(+). It catalyses the reaction butanoyl-CoA + H2O = butanoate + CoA + H(+). The catalysed reaction is hexanoyl-CoA + H2O = hexanoate + CoA + H(+). It carries out the reaction octanoyl-CoA + H2O = octanoate + CoA + H(+). The enzyme catalyses decanoyl-CoA + H2O = decanoate + CoA + H(+). It catalyses the reaction dodecanoyl-CoA + H2O = dodecanoate + CoA + H(+). The catalysed reaction is tetradecanoyl-CoA + H2O = tetradecanoate + CoA + H(+). It carries out the reaction hexadecanoyl-CoA + H2O = hexadecanoate + CoA + H(+). It functions in the pathway lipid metabolism; fatty acid beta-oxidation. With respect to regulation, the 3-oxoacetyl-CoA thiolase activity is inhibited by acetyl-CoA while the acetyl-CoA hydrolase activity is inhibited by acetoacetyl-CoA. Functionally, in the production of energy from fats, this is one of the enzymes that catalyzes the last step of the mitochondrial beta-oxidation pathway, an aerobic process breaking down fatty acids into acetyl-CoA. Using free coenzyme A/CoA, catalyzes the thiolytic cleavage of medium- to long-chain unbranched 3-oxoacyl-CoAs into acetyl-CoA and a fatty acyl-CoA shortened by two carbon atoms. Also catalyzes the condensation of two acetyl-CoA molecules into acetoacetyl-CoA and could be involved in the production of ketone bodies. Also displays hydrolase activity on various fatty acyl-CoAs. Thereby, could be responsible for the production of acetate in a side reaction to beta-oxidation. Abolishes BNIP3-mediated apoptosis and mitochondrial damage. This chain is 3-ketoacyl-CoA thiolase, mitochondrial (Acaa2), found in Rattus norvegicus (Rat).